Here is a 737-residue protein sequence, read N- to C-terminus: Cilium assembly protein DZIP1L (737 aa).

The interval 1–293 (MGFKGKYPQM…LKQSNEQFIQ (293 aa)) is interaction with Rab8. Positions 98–132 (VTDLKEAHTTAQEEIATLRKSLSESNNEVVQLHKR) form a coiled coil. The C2H2-type zinc-finger motif lies at 144 to 167 (YPCHLCTKNFISNEALNVHIGRKH). Disordered stretches follow at residues 167 to 187 (HRVA…DRDK), 214 to 267 (ERNI…KEQL), 415 to 548 (SEFL…RKDA), 624 to 682 (KSPL…VSRD), and 698 to 737 (IRGA…DNLK). Basic and acidic residues-rich tracts occupy residues 244-266 (EPKE…RKEQ) and 415-438 (SEFL…KGSE). Polar residues predominate over residues 457 to 469 (SAGSSDSNPTYTK). Over residues 492–510 (SQEETENEEERSLTEEEGT) the composition is skewed to acidic residues. The segment covering 665 to 677 (SSEQQTRSPSPQR) has biased composition (polar residues). Over residues 724–737 (EDGKSFNDSDDNLK) the composition is skewed to basic and acidic residues.

It belongs to the DZIP C2H2-type zinc-finger protein family. As to quaternary structure, component of a ciliary transition zone (TZ)-localized complex composed of DZIP1, Fam92 and Cby. Interacts directly with Cby. Interacts with Cep290 (via N-terminus). Interacts (via N-terminus) with Rab8. In terms of tissue distribution, in neurons of the second and third antennal segments, expressed at the tip of the dendrites.

It is found in the cytoplasm. The protein localises to the cytoskeleton. The protein resides in the microtubule organizing center. Its subcellular location is the centrosome. It localises to the centriole. It is found in the cilium basal body. Component of the DZIP1-Fam92-Cby complex which promotes ciliogenesis in sensory neurons and spermatocytes by acting downstream of Cep290 to initiate early ciliary membrane formation and thus transition zone (TZ) assembly. During spermatogenesis, also regulates distal elongation of the basal-body and their docking (anchoring) to the plasma membrane and as a consequence, regulates the initiation and proper elongation of axonemal microtubules. Within the complex, required to recruit or stabilize Rab8, Fam92 and Cby at the distal basal body of cilia to promote early ciliary membrane formation and initiate TZ assembly. Also acts with Fam92 to restrict Cep290 localization to the proximal part of the TZ. May also be involved in recruitment or stabilization of Mks1 at the TZ. The polypeptide is Cilium assembly protein DZIP1L (Drosophila melanogaster (Fruit fly)).